We begin with the raw amino-acid sequence, 219 residues long: Small ribosomal subunit protein uS3 (219 aa).

One can recognise a KH type-2 domain in the interval 38–106 (IRTYLKKKLY…KLNLEIKEIK (69 aa)).

Belongs to the universal ribosomal protein uS3 family. As to quaternary structure, part of the 30S ribosomal subunit. Forms a tight complex with proteins S10 and S14.

In terms of biological role, binds the lower part of the 30S subunit head. Binds mRNA in the 70S ribosome, positioning it for translation. The chain is Small ribosomal subunit protein uS3 from Lachnoclostridium phytofermentans (strain ATCC 700394 / DSM 18823 / ISDg) (Clostridium phytofermentans).